The chain runs to 301 residues: Dihydroorotate dehydrogenase B (NAD(+)), catalytic subunit (301 aa).

FMN-binding positions include S21 and K45–S46. Substrate-binding positions include K45, N69–L73, and N125. N125 lines the FMN pocket. The active-site Nucleophile is the C128. 2 residues coordinate FMN: K163 and I187. N188–T189 serves as a coordination point for substrate. FMN-binding positions include G213, G239–G240, and G261–T262.

It belongs to the dihydroorotate dehydrogenase family. Type 1 subfamily. As to quaternary structure, heterotetramer of 2 PyrK and 2 PyrD type B subunits. It depends on FMN as a cofactor.

The protein resides in the cytoplasm. It carries out the reaction (S)-dihydroorotate + NAD(+) = orotate + NADH + H(+). The protein operates within pyrimidine metabolism; UMP biosynthesis via de novo pathway; orotate from (S)-dihydroorotate (NAD(+) route): step 1/1. Functionally, catalyzes the conversion of dihydroorotate to orotate with NAD(+) as electron acceptor. The chain is Dihydroorotate dehydrogenase B (NAD(+)), catalytic subunit (pyrD) from Thermoplasma volcanium (strain ATCC 51530 / DSM 4299 / JCM 9571 / NBRC 15438 / GSS1).